A 196-amino-acid polypeptide reads, in one-letter code: MKYAQYVFLASIFSAVEYSLAQTCAVDSFSVKDNFDPKRYAGKWYALAKKDPEGLFLQDNISAEYTVEEDGTMTASSKGRVKLFGFWVICADMAAQYTVPDPTTPAKMYMTYQGLASYLSSGGDNYWVIDTDYDNYAITYACRSLKEDGSCDDGYSLIFSRNPRGLPPAIQRIVRQKQEEICMSGQFQPVLQSGAC.

Positions 1 to 21 (MKYAQYVFLASIFSAVEYSLA) are cleaved as a signal peptide. 3 disulfide bridges follow: Cys24-Cys182, Cys90-Cys196, and Cys142-Cys151.

This sequence belongs to the calycin superfamily. Lipocalin family.

It localises to the secreted. The protein localises to the extracellular space. The protein resides in the extracellular matrix. It is found in the interphotoreceptor matrix. In terms of biological role, may be involved in the transport of retinol between the photoreceptors and the pigmented epithelium. In Gallus gallus (Chicken), this protein is Purpurin.